A 279-amino-acid chain; its full sequence is Acetylglutamate kinase (279 aa).

Substrate-binding positions include 64–65, R86, and N177; that span reads GG.

This sequence belongs to the acetylglutamate kinase family. ArgB subfamily.

The protein localises to the cytoplasm. The catalysed reaction is N-acetyl-L-glutamate + ATP = N-acetyl-L-glutamyl 5-phosphate + ADP. It functions in the pathway amino-acid biosynthesis; L-arginine biosynthesis; N(2)-acetyl-L-ornithine from L-glutamate: step 2/4. Its function is as follows. Catalyzes the ATP-dependent phosphorylation of N-acetyl-L-glutamate. This is Acetylglutamate kinase from Campylobacter jejuni subsp. jejuni serotype O:23/36 (strain 81-176).